The chain runs to 391 residues: Methylthioribose-1-phosphate isomerase (391 aa).

The active-site Proton donor is Asp267.

It belongs to the eIF-2B alpha/beta/delta subunits family. MtnA subfamily.

Its subcellular location is the cytoplasm. The protein resides in the nucleus. It catalyses the reaction 5-(methylsulfanyl)-alpha-D-ribose 1-phosphate = 5-(methylsulfanyl)-D-ribulose 1-phosphate. The protein operates within amino-acid biosynthesis; L-methionine biosynthesis via salvage pathway; L-methionine from S-methyl-5-thio-alpha-D-ribose 1-phosphate: step 1/6. Functionally, catalyzes the interconversion of methylthioribose-1-phosphate (MTR-1-P) into methylthioribulose-1-phosphate (MTRu-1-P). This is Methylthioribose-1-phosphate isomerase from Ajellomyces capsulatus (strain NAm1 / WU24) (Darling's disease fungus).